We begin with the raw amino-acid sequence, 254 residues long: Mediator of RNA polymerase II transcription subunit 8 (254 aa).

Residues 154–190 (LEEREMGIQNVVTGLRRQLEDDERDEDEDEDDEEEEE) adopt a coiled-coil conformation. The interval 167-234 (GLRRQLEDDE…SQQVQKGAGP (68 aa)) is disordered. A compositionally biased stretch (acidic residues) spans 173–199 (EDDERDEDEDEDDEEEEEGEGEDEEME).

Belongs to the Mediator complex subunit 8 family. In terms of assembly, component of the Mediator complex.

The protein resides in the nucleus. In terms of biological role, component of the Mediator complex, a coactivator involved in the regulated transcription of nearly all RNA polymerase II-dependent genes. Mediator functions as a bridge to convey information from gene-specific regulatory proteins to the basal RNA polymerase II transcription machinery. Mediator is recruited to promoters by direct interactions with regulatory proteins and serves as a scaffold for the assembly of a functional preinitiation complex with RNA polymerase II and the general transcription factors. In Aspergillus clavatus (strain ATCC 1007 / CBS 513.65 / DSM 816 / NCTC 3887 / NRRL 1 / QM 1276 / 107), this protein is Mediator of RNA polymerase II transcription subunit 8 (med8).